A 64-amino-acid chain; its full sequence is Alpha-conotoxin-like Ac1.1b (64 aa).

An N-terminal signal peptide occupies residues M1–S21. The propeptide occupies F22–R47. The tract at residues P23–K46 is disordered. Residues S28–K44 are compositionally biased toward basic and acidic residues. 2 cysteine pairs are disulfide-bonded: C51–C56 and C52–C62. Cysteine amide is present on C62.

The protein belongs to the conotoxin A superfamily. In terms of tissue distribution, expressed by the venom duct.

It is found in the secreted. Its function is as follows. Alpha-conotoxins act on postsynaptic membranes, they bind to the nicotinic acetylcholine receptors (nAChR) and thus inhibit them. In Conus achatinus (Little frog cone), this protein is Alpha-conotoxin-like Ac1.1b.